We begin with the raw amino-acid sequence, 421 residues long: G/T mismatch-specific thymine DNA glycosylase (421 aa).

The segment at 45–108 (PNMATVTEQQ…STKSKEKQEK (64 aa)) is disordered. Residues 77-89 (RAAEPQEPVEPKK) are compositionally biased toward basic and acidic residues. The segment covering 91–100 (ATSKKSGKST) has biased composition (basic residues). Residues lysine 114 and lysine 259 each participate in a glycyl lysine isopeptide (Lys-Gly) (interchain with G-Cter in SUMO2) cross-link. Lysine 341 participates in a covalent cross-link: Glycyl lysine isopeptide (Lys-Gly) (interchain with G-Cter in SUMO); alternate. Lysine 341 participates in a covalent cross-link: Glycyl lysine isopeptide (Lys-Gly) (interchain with G-Cter in SUMO2); alternate.

This sequence belongs to the uracil-DNA glycosylase (UDG) superfamily. TDG/mug family. Homodimer. Interacts with AICDA and GADD45A. Sumoylation on Lys-341 by either SUMO1 or SUMO2 induces dissociation of the product DNA.

The protein resides in the nucleus. It carries out the reaction Hydrolyzes mismatched double-stranded DNA and polynucleotides, releasing free thymine.. In terms of biological role, DNA glycosylase that plays a key role in active DNA demethylation: specifically recognizes and binds 5-formylcytosine (5fC) and 5-carboxylcytosine (5caC) in the context of CpG sites and mediates their excision through base-excision repair (BER) to install an unmethylated cytosine. Cannot remove 5-hydroxymethylcytosine (5hmC). According to an alternative model, involved in DNA demethylation by mediating DNA glycolase activity toward 5-hydroxymethyluracil (5hmU) produced by deamination of 5hmC. Also involved in DNA repair by acting as a thymine-DNA glycosylase that mediates correction of G/T mispairs to G/C pairs: in the DNA of higher eukaryotes, hydrolytic deamination of 5-methylcytosine to thymine leads to the formation of G/T mismatches. Its role in the repair of canonical base damage is however minor compared to its role in DNA demethylation. It is capable of hydrolyzing the carbon-nitrogen bond between the sugar-phosphate backbone of the DNA and a mispaired thymine. In addition to the G/T, it can remove thymine also from C/T and T/T mispairs in the order G/T &gt;&gt; C/T &gt; T/T. It has no detectable activity on apyrimidinic sites and does not catalyze the removal of thymine from A/T pairs or from single-stranded DNA. It can also remove uracil and 5-bromouracil from mispairs with guanine. This is G/T mismatch-specific thymine DNA glycosylase (Tdg) from Mus musculus (Mouse).